A 419-amino-acid polypeptide reads, in one-letter code: UDP-N-acetylglucosamine 1-carboxyvinyltransferase (419 aa).

A phosphoenolpyruvate-binding site is contributed by 22–23; the sequence is KN. Arginine 95 is a binding site for UDP-N-acetyl-alpha-D-glucosamine. The active-site Proton donor is the cysteine 119. At cysteine 119 the chain carries 2-(S-cysteinyl)pyruvic acid O-phosphothioketal. UDP-N-acetyl-alpha-D-glucosamine contacts are provided by residues 164–167, aspartate 308, and isoleucine 330; that span reads KVSV.

It belongs to the EPSP synthase family. MurA subfamily.

Its subcellular location is the cytoplasm. The catalysed reaction is phosphoenolpyruvate + UDP-N-acetyl-alpha-D-glucosamine = UDP-N-acetyl-3-O-(1-carboxyvinyl)-alpha-D-glucosamine + phosphate. It functions in the pathway cell wall biogenesis; peptidoglycan biosynthesis. In terms of biological role, cell wall formation. Adds enolpyruvyl to UDP-N-acetylglucosamine. This Rickettsia rickettsii (strain Iowa) protein is UDP-N-acetylglucosamine 1-carboxyvinyltransferase.